The chain runs to 401 residues: Multidrug resistance protein MdtH (401 aa).

Residues 1–12 are Cytoplasmic-facing; sequence MSRVSQARNLGK. Residues 13–33 form a helical membrane-spanning segment; it reads YFLLIDNMLVVLGFFVVFPLV. The Periplasmic segment spans residues 34 to 98; that stretch reads SIRFVDQMGW…GFATMGIAHE (65 aa). The chain crosses the membrane as a helical span at residues 99 to 116; it reads PWLLWFSCLLSGLGGTLF. The Cytoplasmic segment spans residues 117–137; the sequence is DPPRSALVVKLMPQQRGRFFS. Residues 138 to 158 form a helical membrane-spanning segment; it reads LLMMQDSAGAVIGALLGSWLL. The Periplasmic portion of the chain corresponds to 159–163; it reads QYDFR. Residues 164–184 form a helical membrane-spanning segment; it reads LVCATGAVLFVLCAAFNAWLL. The Cytoplasmic portion of the chain corresponds to 185–212; that stretch reads PAWKLSTIRTPVREGMTRVMRDKRFVTY. Residues 213–233 form a helical membrane-spanning segment; that stretch reads VLTLAGYYMLAVQVMLMLPIM. Residues 234–242 lie on the Periplasmic side of the membrane; sequence VNDVAGAPS. The chain crosses the membrane as a helical span at residues 243–263; sequence AVKWMYAIEACLSLTLLYPIA. At 264 to 275 the chain is on the cytoplasmic side; the sequence is RWSEKHFRLEHR. The helical transmembrane segment at 276–296 threads the bilayer; that stretch reads LMAGLLIMSLSMMPVGMVSGL. The Periplasmic segment spans residues 297–298; the sequence is QQ. Residues 299 to 319 traverse the membrane as a helical segment; that stretch reads LFTLICLFYIGSIIAEPARET. The Cytoplasmic portion of the chain corresponds to 320–338; sequence LSASLADARARGSYMGFSR. A helical transmembrane segment spans residues 339–359; that stretch reads LGLAIGGTIGYIGGGWLFDLG. Residues 360–366 are Periplasmic-facing; it reads KSAHQPE. A helical transmembrane segment spans residues 367–387; sequence LPWMMLGIIGIFTFLALGWQF. At 388-401 the chain is on the cytoplasmic side; sequence SQKRAARRLLERDA.

It belongs to the major facilitator superfamily. DHA1 family. MdtH (TC 2.A.1.2.21) subfamily.

Its subcellular location is the cell inner membrane. This chain is Multidrug resistance protein MdtH, found in Shigella dysenteriae serotype 1 (strain Sd197).